A 329-amino-acid chain; its full sequence is MLSSLNVLQSSFRGKTALSNSTLLQKVSFAGKEYPLEPIDEKTPILFQWFEARPERYEKGEVPILNTKEHPYLSNIINAAKIENERIIGVLVDGNFTYEQKKEFLSLENEYQNIKIIYRADVDFSMYDKKLSDIYLENIHKQESYPASERDNYLLGLLREELKNIPEGKDSLIESYAEKREHTWFDFFRNLAMLKAGSLFTETGKTGCHNISPCSGCIYLDADMIITDKLGVLYAPDGIAVHVDCNDEIKSLENGAIVVNRSNHPALLAGLDIMKSKVDAHPYYDGLGKGIKRHFNYSSLHDYNAFCDFIEFKHENIIPNTSMYTCSSW.

Arg-13 carries N-beta-linked (GlcNAc) arginine; by autocatalysis glycosylation. UDP-N-acetyl-alpha-D-glucosamine is bound at residue 48–50 (QWF). Residue Arg-53 is glycosylated (N-beta-linked (GlcNAc) arginine; by autocatalysis). Tyr-72 is a binding site for UDP-N-acetyl-alpha-D-glucosamine. Arg-159 is a glycosylation site (N-beta-linked (GlcNAc) arginine; by autocatalysis). 219–222 (YLDA) contributes to the UDP-N-acetyl-alpha-D-glucosamine binding site. Residues 221-223 (DAD) carry the DXD motif motif. Asp-223 contributes to the Mn(2+) binding site. Glu-253 (proton acceptor) is an active-site residue. Arg-293 carries an N-beta-linked (GlcNAc) arginine; by autocatalysis glycan. Asn-320 and Ser-322 together coordinate Mn(2+). Residues Ser-322 and 327–329 (SSW) each bind UDP-N-acetyl-alpha-D-glucosamine.

This sequence belongs to the glycosyltransferase NleB family. Mn(2+) serves as cofactor. Auto-glycosylated: arginine GlcNAcylation is required for activity toward death domain-containing host target proteins.

It is found in the secreted. Its subcellular location is the host cytoplasm. It carries out the reaction L-arginyl-[protein] + UDP-N-acetyl-alpha-D-glucosamine = N(omega)-(N-acetyl-beta-D-glucosaminyl)-L-arginyl-[protein] + UDP + H(+). With respect to regulation, protein-arginine N-acetylglucosaminyltransferase activity is inhibited by 100066N compound (flavone analog) and 102644N compound (a substituted isoxazole). In terms of biological role, protein-arginine N-acetylglucosaminyltransferase effector that disrupts TNF signaling in infected cells, including NF-kappa-B signaling, apoptosis and necroptosis. Acts by catalyzing the transfer of a single N-acetylglucosamine (GlcNAc) to a conserved arginine residue in the death domain of host proteins such as FADD: arginine GlcNAcylation prevents homotypic/heterotypic death domain interactions and assembly of the oligomeric TNF-alpha receptor complex, thereby disrupting TNF signaling. Also acts on host proteins without a death domain: catalyzes arginine GlcNAcylation of host GAPDH protein, thereby preventing GAPDH interaction with TRAF2, leading to inhibit NF-kappa-B signaling. Catalyzes auto-GlcNAcylation, which is required for activity toward death domain-containing host target proteins. The polypeptide is Protein-arginine N-acetylglucosaminyltransferase NleB1 (Escherichia coli O157:H7).